We begin with the raw amino-acid sequence, 556 residues long: Urocanate hydratase (556 aa).

Residues 52 to 53 (GG), Gln-130, 176 to 178 (GMG), Glu-196, Arg-201, 243 to 244 (NA), 264 to 268 (QTSAH), 274 to 275 (YL), and Tyr-323 each bind NAD(+). The active site involves Cys-411. Gly-493 contributes to the NAD(+) binding site.

This sequence belongs to the urocanase family. NAD(+) is required as a cofactor.

The protein localises to the cytoplasm. The enzyme catalyses 4-imidazolone-5-propanoate = trans-urocanate + H2O. It participates in amino-acid degradation; L-histidine degradation into L-glutamate; N-formimidoyl-L-glutamate from L-histidine: step 2/3. Its function is as follows. Catalyzes the conversion of urocanate to 4-imidazolone-5-propionate. The protein is Urocanate hydratase of Rhodospirillum rubrum (strain ATCC 11170 / ATH 1.1.1 / DSM 467 / LMG 4362 / NCIMB 8255 / S1).